The following is a 144-amino-acid chain: 3-hydroxyacyl-[acyl-carrier-protein] dehydratase FabZ (144 aa).

H49 is an active-site residue.

This sequence belongs to the thioester dehydratase family. FabZ subfamily.

Its subcellular location is the cytoplasm. The enzyme catalyses a (3R)-hydroxyacyl-[ACP] = a (2E)-enoyl-[ACP] + H2O. Its function is as follows. Involved in unsaturated fatty acids biosynthesis. Catalyzes the dehydration of short chain beta-hydroxyacyl-ACPs and long chain saturated and unsaturated beta-hydroxyacyl-ACPs. The sequence is that of 3-hydroxyacyl-[acyl-carrier-protein] dehydratase FabZ from Alkaliphilus oremlandii (strain OhILAs) (Clostridium oremlandii (strain OhILAs)).